The primary structure comprises 179 residues: MSNFIDKTFTVIADILLKVLPASKQEKQAFSYYRAGMSAQSEGKYAEALENYYEALQLEEDPYDRSYTLYNIGLIYGNNGNYSQALEYYHQALELNSNLPQALNNIAVIYHSQGLNALQMQNQDKNLEIRNDEYLELAKEFFDKAAEYWRQALKLAPDNYPGAQNWLKVTGRQISEEYF.

TPR repeat units follow at residues 29-62 (AFSY…EEDP), 66-99 (SYTL…NSNL), and 126-159 (NLEI…APDN).

The protein belongs to the Ycf3 family.

The protein resides in the plastid. It localises to the chloroplast thylakoid membrane. In terms of biological role, essential for the assembly of the photosystem I (PSI) complex. May act as a chaperone-like factor to guide the assembly of the PSI subunits. This chain is Photosystem I assembly protein Ycf3, found in Trieres chinensis (Marine centric diatom).